A 217-amino-acid polypeptide reads, in one-letter code: 3,4-dihydroxy-2-butanone 4-phosphate synthase (217 aa).

Residues 37 to 38 (RE), D42, 150 to 154 (RRGHT), and E174 each bind D-ribulose 5-phosphate. Residue E38 participates in Mg(2+) binding. H153 is a binding site for Mg(2+).

The protein belongs to the DHBP synthase family. As to quaternary structure, homodimer. It depends on Mg(2+) as a cofactor. Mn(2+) serves as cofactor.

The enzyme catalyses D-ribulose 5-phosphate = (2S)-2-hydroxy-3-oxobutyl phosphate + formate + H(+). It functions in the pathway cofactor biosynthesis; riboflavin biosynthesis; 2-hydroxy-3-oxobutyl phosphate from D-ribulose 5-phosphate: step 1/1. Catalyzes the conversion of D-ribulose 5-phosphate to formate and 3,4-dihydroxy-2-butanone 4-phosphate. The sequence is that of 3,4-dihydroxy-2-butanone 4-phosphate synthase from Syntrophotalea carbinolica (strain DSM 2380 / NBRC 103641 / GraBd1) (Pelobacter carbinolicus).